Consider the following 580-residue polypeptide: Cytochrome P450 monooxygenase helB1 (580 aa).

The tract at residues 1 to 32 (MRTYAIRPVSNRLPGPIEPKKHRRDRDNSTTG) is disordered. An N-linked (GlcNAc...) asparagine glycan is attached at N28. Residues 61-81 (FLNTISVLQVLAAIFIGALTY) form a helical membrane-spanning segment. A heme-binding site is contributed by C497.

This sequence belongs to the cytochrome P450 family. Requires heme as cofactor.

Its subcellular location is the membrane. Its pathway is mycotoxin biosynthesis. Cytochrome P450 monooxygenase; part of the gene cluster that mediates the biosynthesis of helvolic acid, an antibacterial nortriterpenoid. Protostadienol synthase helA cyclizes (3S)-oxidosqualene to (17Z)-protosta-17(20),24-dien-3-beta-ol (protostadienol). The synthesis of protostadienol is followed by several steps of monooxygenation, dehydrogenation, and acyl transfer to yield the final helvolic acid. Following the cyclization to the tetracyclic protostadienol by helA, cytochrome P450 monooxygenases helB1-mediated and helB2-mediated oxidation at C-4 and C-16, acyltransferase helD2-dependent acetylation of 16-OH, oxidation of C-21 by cytochrome P450 monooxygenase helB4, and short chain dehydrogenase helC-dependent oxidative decarboxylation yield the fusidane skeleton. This intermediate is further modified in three additional steps mediated by the cytochrome P450 monooxygenase helB3, the acyltransferase helD1, and the 3-ketosteroid 1-dehydrogenase helE to give helvolic acid. Compared with the late stages in the biosynthesis of helvolic acid, enzymes involved in the early stage modifications act in a relatively strict order. The hydroxylation of C-16 by helB1 and subsequent acetylation by helD2 should occur before the helB3-mediated oxidation of C-21. C-4 demethylation in fusidane-type antibiotics proceeds in an unusual manner though it is also achieved by oxidative decarboxylation. The methyl group at C-4 beta position is oxidized by helB1 and subsequently removed by the short chain dehydrogenase helC. In Aspergillus fumigatus (strain ATCC MYA-4609 / CBS 101355 / FGSC A1100 / Af293) (Neosartorya fumigata), this protein is Cytochrome P450 monooxygenase helB1.